Consider the following 185-residue polypeptide: Lipid A acyltransferase PagP (185 aa).

The first 14 residues, Met-1 to Gly-14, serve as a signal peptide directing secretion. Cys-15 carries the N-palmitoyl cysteine lipid modification. A lipid anchor (S-diacylglycerol cysteine) is attached at Cys-15. Residues His-57, Asp-100, and Ser-101 contribute to the active site.

Belongs to the lipid A palmitoyltransferase family. As to quaternary structure, homodimer.

The protein resides in the cell outer membrane. It carries out the reaction a lipid A + a 1,2-diacyl-sn-glycero-3-phosphocholine = a hepta-acyl lipid A + a 2-acyl-sn-glycero-3-phosphocholine. The catalysed reaction is a lipid IVA + a 1,2-diacyl-sn-glycero-3-phosphocholine = a lipid IVB + a 2-acyl-sn-glycero-3-phosphocholine. It catalyses the reaction a lipid IIA + a 1,2-diacyl-sn-glycero-3-phosphocholine = a lipid IIB + a 2-acyl-sn-glycero-3-phosphocholine. Its function is as follows. Transfers a fatty acid residue from the sn-1 position of a phospholipid to the N-linked hydroxyfatty acid chain on the proximal unit of lipid A or its precursors. In Erwinia sp. (strain Ejp617), this protein is Lipid A acyltransferase PagP.